We begin with the raw amino-acid sequence, 550 residues long: Chaperonin GroEL (550 aa).

ATP-binding positions include 30–33 (TLGP), Lys51, 87–91 (DGTTT), Gly416, 480–482 (NVA), and Asp496. A disordered region spans residues 525–550 (LPKKDDEGGGGDMGGMGGMGGMGGMM). Residues 534 to 550 (GGDMGGMGGMGGMGGMM) show a composition bias toward gly residues.

Belongs to the chaperonin (HSP60) family. In terms of assembly, forms a cylinder of 14 subunits composed of two heptameric rings stacked back-to-back. Interacts with the co-chaperonin GroES.

The protein localises to the cytoplasm. The enzyme catalyses ATP + H2O + a folded polypeptide = ADP + phosphate + an unfolded polypeptide.. Together with its co-chaperonin GroES, plays an essential role in assisting protein folding. The GroEL-GroES system forms a nano-cage that allows encapsulation of the non-native substrate proteins and provides a physical environment optimized to promote and accelerate protein folding. The chain is Chaperonin GroEL from Halorhodospira halophila (strain DSM 244 / SL1) (Ectothiorhodospira halophila (strain DSM 244 / SL1)).